A 181-amino-acid chain; its full sequence is Adenine phosphoribosyltransferase (181 aa).

Belongs to the purine/pyrimidine phosphoribosyltransferase family. Homodimer.

The protein resides in the cytoplasm. The enzyme catalyses AMP + diphosphate = 5-phospho-alpha-D-ribose 1-diphosphate + adenine. It participates in purine metabolism; AMP biosynthesis via salvage pathway; AMP from adenine: step 1/1. Its function is as follows. Catalyzes a salvage reaction resulting in the formation of AMP, that is energically less costly than de novo synthesis. In Acidobacterium capsulatum (strain ATCC 51196 / DSM 11244 / BCRC 80197 / JCM 7670 / NBRC 15755 / NCIMB 13165 / 161), this protein is Adenine phosphoribosyltransferase.